A 90-amino-acid chain; its full sequence is NELL2-interacting cell ontogeny regulator 1 (90 aa).

Positions 1 to 26 (MVSSGYLQAVMLLLAVQLLCFRPSDA) are cleaved as a signal peptide.

Belongs to the NICOL family.

It is found in the secreted. Its function is as follows. mRNA-binding protein which interacts with a range of target mRNAs and may promote extracellular matrix production. The polypeptide is NELL2-interacting cell ontogeny regulator 1 (Salmo salar (Atlantic salmon)).